Here is a 236-residue protein sequence, read N- to C-terminus: Protein EVI2A (236 aa).

An N-terminal signal peptide occupies residues 1-30; it reads MPTDMEHTGHYLHLAFLMTTVFSLSPGTKA. Residues asparagine 31, asparagine 38, asparagine 49, asparagine 73, and asparagine 112 are each glycosylated (N-linked (GlcNAc...) asparagine). The Extracellular segment spans residues 31–133; it reads NYTRLWANST…DVCAENNNNM (103 aa). Residues 134–154 traverse the membrane as a helical segment; the sequence is AMLICLIIIAVLFLICTFLFL. The Cytoplasmic portion of the chain corresponds to 155–236; sequence STVVLANKVS…TEKLTNKQIG (82 aa). Serine 211 is subject to Phosphoserine. The disordered stretch occupies residues 217–236; sequence ATRERKDEEGTEKLTNKQIG. Residues 218-236 show a composition bias toward basic and acidic residues; sequence TRERKDEEGTEKLTNKQIG.

Belongs to the EVI2A family.

It is found in the membrane. May complex with itself or/and other proteins within the membrane, to function as part of a cell-surface receptor. The sequence is that of Protein EVI2A (EVI2A) from Homo sapiens (Human).